The following is a 550-amino-acid chain: (+)-germacrene D synthase (550 aa).

Residues aspartate 304, aspartate 308, and glutamate 455 each coordinate Mg(2+). A DDXXD motif motif is present at residues 304 to 308 (DDIYD).

It belongs to the terpene synthase family. Tpsa subfamily. The cofactor is Mg(2+). Requires Mn(2+) as cofactor. Co(2+) serves as cofactor. It depends on Ni(2+) as a cofactor.

Its subcellular location is the cytoplasm. It catalyses the reaction (2E,6E)-farnesyl diphosphate = (+)-germacrene D + diphosphate. It participates in secondary metabolite biosynthesis; terpenoid biosynthesis. In terms of biological role, involved in the biosynthesis of germacrene D. Can use farnesyl diphosphate as substrate, but not geranyl diphosphate. Produces mainly (+)-germacrene D along with germacrene B and a number of minor by-products. The chain is (+)-germacrene D synthase from Zingiber officinale (Ginger).